A 133-amino-acid chain; its full sequence is Late embryogenesis abundant protein B19.3 (133 aa).

The tract at residues 1–133 (MASGQQERSE…IDESKFKTKS (133 aa)) is disordered. 3 stretches are compositionally biased toward basic and acidic residues: residues 7–19 (ERSE…REGE), 32–102 (EAQE…EMGR), and 113–133 (GGER…KTKS). 3 tandem repeats follow at residues 24-43 (GGTG…GRSR), 44-63 (GGQT…MGHK), and 64-83 (GGET…MGHK). Residues 24–83 (GGTGGKTLEAQEHLAEGRSRGGQTRKDQLGEEGYREMGHKGGETRKEQLGEEGYREMGHK) form a 3 X 20 AA tandem repeats region.

The protein belongs to the small hydrophilic plant seed protein family.

Functionally, lea proteins are late embryonic proteins abundant in higher plant seed embryos. The chain is Late embryogenesis abundant protein B19.3 (B19.3) from Hordeum vulgare (Barley).